The following is a 326-amino-acid chain: Thrombopoietin (326 aa).

The signal sequence occupies residues 1-21 (MELTDLLLVAILLLTARLTLS). Disulfide bonds link Cys28-Cys172 and Cys50-Cys106. N-linked (GlcNAc...) asparagine glycosylation is found at Asn197, Asn206, Asn235, Asn249, and Asn256. The interval 307–326 (FPPSPTFPTPGSPPQLPPVS) is disordered. The span at 308–326 (PPSPTFPTPGSPPQLPPVS) shows a compositional bias: pro residues.

The protein belongs to the EPO/TPO family.

The protein resides in the secreted. In terms of biological role, lineage-specific cytokine affecting the proliferation and maturation of megakaryocytes from their committed progenitor cells. It acts at a late stage of megakaryocyte development. It may be the major physiological regulator of circulating platelets. This chain is Thrombopoietin (Thpo), found in Rattus norvegicus (Rat).